The sequence spans 277 residues: MALKHYKPITNGRRNMTSLDFAEITKTTPEKSLLQPLPKRAGRNNQGKLTVRHHGGGHKRQYRVIDFKRNKDGIPAKVDSIQYDPNRSANIALLVYADGEKRYIIAPKGLQVGQTIENGEEADIKTGNALPLANIPVGTTIHNIELKPGRGGQIARSAGASAQVLGKEGKYVLVRLRSGEVRMILSTCRATVGQVGNLQHELVNVGKAGRSRWKGIRPTVRGSVMNPNDHPHGGGEGRAPIGRPSPMSPWGKPTLGKKTRRGKKSSDKLIVRGRKRK.

Disordered regions lie at residues 35–58 (QPLP…GGGH) and 213–277 (WKGI…RKRK).

Belongs to the universal ribosomal protein uL2 family. Part of the 50S ribosomal subunit. Forms a bridge to the 30S subunit in the 70S ribosome.

Its function is as follows. One of the primary rRNA binding proteins. Required for association of the 30S and 50S subunits to form the 70S ribosome, for tRNA binding and peptide bond formation. It has been suggested to have peptidyltransferase activity; this is somewhat controversial. Makes several contacts with the 16S rRNA in the 70S ribosome. The chain is Large ribosomal subunit protein uL2 from Staphylococcus carnosus (strain TM300).